Reading from the N-terminus, the 74-residue chain is Kappa-stichotoxin-Sgt4a (74 aa).

Residues 1 to 22 (MKFQVIAAVLLIEFCLCVVVTA) form the signal peptide. Residues 23 to 39 (RMELQDVEDVENGFQKR) constitute a propeptide that is removed on maturation. Residues 42–74 (CIDTIPQSRCTAFQCKHSMKYRLSFCRKTCGTC) form the ShKT domain. 3 disulfide bridges follow: cysteine 42-cysteine 74, cysteine 51-cysteine 67, and cysteine 56-cysteine 71.

It belongs to the sea anemone type 1 potassium channel toxin family. Type 1a subfamily.

Its subcellular location is the secreted. It localises to the nematocyst. Its function is as follows. Inhibits voltage-gated potassium channels (Kv) with higher potency for Kv1.1/KCNA1 and Kv1.3/KCNA3. The chain is Kappa-stichotoxin-Sgt4a from Stichodactyla gigantea (Giant carpet anemone).